Reading from the N-terminus, the 219-residue chain is FMN-dependent NADH:quinone oxidoreductase 2 (219 aa).

FMN is bound by residues Ser10 and 23-25 (SIS).

This sequence belongs to the azoreductase type 1 family. In terms of assembly, homodimer. FMN serves as cofactor.

It carries out the reaction 2 a quinone + NADH + H(+) = 2 a 1,4-benzosemiquinone + NAD(+). The enzyme catalyses N,N-dimethyl-1,4-phenylenediamine + anthranilate + 2 NAD(+) = 2-(4-dimethylaminophenyl)diazenylbenzoate + 2 NADH + 2 H(+). Quinone reductase that provides resistance to thiol-specific stress caused by electrophilic quinones. Functionally, also exhibits azoreductase activity. Catalyzes the reductive cleavage of the azo bond in aromatic azo compounds to the corresponding amines. This Colwellia psychrerythraea (strain 34H / ATCC BAA-681) (Vibrio psychroerythus) protein is FMN-dependent NADH:quinone oxidoreductase 2.